A 224-amino-acid chain; its full sequence is Putative cobalt transport protein CbiM (224 aa).

Helical transmembrane passes span 8–28 (LPPLWCLIYYIICIPFIVYGI), 41–61 (AMPMLALSGAFMFILSSLKMP), 75–95 (FGAVFFGPAVVGVLSVIVLVF), 108–128 (LGANVLSMGIIGPLCGYAVWL), 138–158 (EIAMFFTAFVADLMTYVVTAI), and 169–189 (FFTALVTFLGIFAVTQIPLAI).

This sequence belongs to the CbiM family. In terms of assembly, forms an energy-coupling factor (ECF) transporter complex composed of an ATP-binding protein (A component, CbiO), a transmembrane protein (T component, CbiQ) and 2 possible substrate-capture proteins (S components, CbiM and CbiN) of unknown stoichimetry.

The protein resides in the cell membrane. It functions in the pathway cofactor biosynthesis; adenosylcobalamin biosynthesis. Functionally, part of the energy-coupling factor (ECF) transporter complex CbiMNOQ involved in cobalt import. This Methanosphaera stadtmanae (strain ATCC 43021 / DSM 3091 / JCM 11832 / MCB-3) protein is Putative cobalt transport protein CbiM.